The sequence spans 155 residues: Endoribonuclease YbeY (155 aa).

The Zn(2+) site is built by His114, His118, and His124.

Belongs to the endoribonuclease YbeY family. The cofactor is Zn(2+).

It localises to the cytoplasm. Its function is as follows. Single strand-specific metallo-endoribonuclease involved in late-stage 70S ribosome quality control and in maturation of the 3' terminus of the 16S rRNA. In Photorhabdus laumondii subsp. laumondii (strain DSM 15139 / CIP 105565 / TT01) (Photorhabdus luminescens subsp. laumondii), this protein is Endoribonuclease YbeY.